A 781-amino-acid chain; its full sequence is DNA translocase FtsK 2 (781 aa).

The next 4 membrane-spanning stretches (helical) occupy residues 24 to 44, 74 to 94, 120 to 140, and 170 to 190; these read LLGEVRWFLLLAVTIAFLTIL, FADVLLFVFGASAYWWALLLL, AGVTWFGFALILSASMGLEAI, and GFTGGTLLLLLMFTVGLSLFF. At 191 to 781 the chain is on the cytoplasmic side; that stretch reads HFSWLNLAEQ…NRNGNVVEEE (591 aa). Residues 414 to 623 form the FtsK domain; it reads GKPVVADLAK…FQVSSKIDSR (210 aa). An ATP-binding site is contributed by 434-439; it reads GSGKSV.

The protein belongs to the FtsK/SpoIIIE/SftA family. In terms of assembly, homohexamer. Forms a ring that surrounds DNA.

The protein resides in the cell inner membrane. In terms of biological role, essential cell division protein that coordinates cell division and chromosome segregation. The N-terminus is involved in assembly of the cell-division machinery. The C-terminus functions as a DNA motor that moves dsDNA in an ATP-dependent manner towards the dif recombination site, which is located within the replication terminus region. Translocation stops specifically at Xer-dif sites, where FtsK interacts with the Xer recombinase, allowing activation of chromosome unlinking by recombination. FtsK orienting polar sequences (KOPS) guide the direction of DNA translocation. FtsK can remove proteins from DNA as it translocates, but translocation stops specifically at XerCD-dif site, thereby preventing removal of XerC and XerD from dif. The sequence is that of DNA translocase FtsK 2 (ftsK2) from Ralstonia nicotianae (strain ATCC BAA-1114 / GMI1000) (Ralstonia solanacearum).